The primary structure comprises 82 residues: Small ribosomal subunit protein bS16 (82 aa).

The protein belongs to the bacterial ribosomal protein bS16 family.

The sequence is that of Small ribosomal subunit protein bS16 from Tolumonas auensis (strain DSM 9187 / NBRC 110442 / TA 4).